Reading from the N-terminus, the 443-residue chain is UPF0656 protein C926.02 (443 aa).

The protein belongs to the UPF0656 family.

The protein localises to the cytoplasm. It localises to the nucleus. In Schizosaccharomyces pombe (strain 972 / ATCC 24843) (Fission yeast), this protein is UPF0656 protein C926.02.